Reading from the N-terminus, the 124-residue chain is Holo-[acyl-carrier-protein] synthase (124 aa).

Residues D8 and E56 each coordinate Mg(2+).

It belongs to the P-Pant transferase superfamily. AcpS family. It depends on Mg(2+) as a cofactor.

The protein localises to the cytoplasm. It catalyses the reaction apo-[ACP] + CoA = holo-[ACP] + adenosine 3',5'-bisphosphate + H(+). Its function is as follows. Transfers the 4'-phosphopantetheine moiety from coenzyme A to a Ser of acyl-carrier-protein. This is Holo-[acyl-carrier-protein] synthase from Nitratidesulfovibrio vulgaris (strain ATCC 29579 / DSM 644 / CCUG 34227 / NCIMB 8303 / VKM B-1760 / Hildenborough) (Desulfovibrio vulgaris).